Reading from the N-terminus, the 176-residue chain is ATP synthase subunit b (176 aa).

The chain crosses the membrane as a helical span at residues F18 to V38.

It belongs to the ATPase B chain family. As to quaternary structure, F-type ATPases have 2 components, F(1) - the catalytic core - and F(0) - the membrane proton channel. F(1) has five subunits: alpha(3), beta(3), gamma(1), delta(1), epsilon(1). F(0) has three main subunits: a(1), b(2) and c(10-14). The alpha and beta chains form an alternating ring which encloses part of the gamma chain. F(1) is attached to F(0) by a central stalk formed by the gamma and epsilon chains, while a peripheral stalk is formed by the delta and b chains.

It localises to the cell inner membrane. In terms of biological role, f(1)F(0) ATP synthase produces ATP from ADP in the presence of a proton or sodium gradient. F-type ATPases consist of two structural domains, F(1) containing the extramembraneous catalytic core and F(0) containing the membrane proton channel, linked together by a central stalk and a peripheral stalk. During catalysis, ATP synthesis in the catalytic domain of F(1) is coupled via a rotary mechanism of the central stalk subunits to proton translocation. Component of the F(0) channel, it forms part of the peripheral stalk, linking F(1) to F(0). The protein is ATP synthase subunit b of Sphingopyxis alaskensis (strain DSM 13593 / LMG 18877 / RB2256) (Sphingomonas alaskensis).